Consider the following 347-residue polypeptide: Phenylalanine--tRNA ligase alpha subunit (347 aa).

Residue Glu259 participates in Mg(2+) binding.

This sequence belongs to the class-II aminoacyl-tRNA synthetase family. Phe-tRNA synthetase alpha subunit type 1 subfamily. Tetramer of two alpha and two beta subunits. It depends on Mg(2+) as a cofactor.

Its subcellular location is the cytoplasm. It carries out the reaction tRNA(Phe) + L-phenylalanine + ATP = L-phenylalanyl-tRNA(Phe) + AMP + diphosphate + H(+). The sequence is that of Phenylalanine--tRNA ligase alpha subunit from Oenococcus oeni (strain ATCC BAA-331 / PSU-1).